We begin with the raw amino-acid sequence, 369 residues long: Anhydro-N-acetylmuramic acid kinase (369 aa).

Position 12 to 19 (12 to 19) interacts with ATP; it reads GTSLDGVD.

The protein belongs to the anhydro-N-acetylmuramic acid kinase family.

It carries out the reaction 1,6-anhydro-N-acetyl-beta-muramate + ATP + H2O = N-acetyl-D-muramate 6-phosphate + ADP + H(+). The protein operates within amino-sugar metabolism; 1,6-anhydro-N-acetylmuramate degradation. It participates in cell wall biogenesis; peptidoglycan recycling. Functionally, catalyzes the specific phosphorylation of 1,6-anhydro-N-acetylmuramic acid (anhMurNAc) with the simultaneous cleavage of the 1,6-anhydro ring, generating MurNAc-6-P. Is required for the utilization of anhMurNAc either imported from the medium or derived from its own cell wall murein, and thus plays a role in cell wall recycling. This is Anhydro-N-acetylmuramic acid kinase from Escherichia coli O8 (strain IAI1).